Consider the following 360-residue polypeptide: Peptide chain release factor 1 (360 aa).

N5-methylglutamine is present on Gln235. A disordered region spans residues 286 to 313 (RQQAEASTRRNLLGSGDRSDRNRTYNFP).

It belongs to the prokaryotic/mitochondrial release factor family. Methylated by PrmC. Methylation increases the termination efficiency of RF1.

It localises to the cytoplasm. Its function is as follows. Peptide chain release factor 1 directs the termination of translation in response to the peptide chain termination codons UAG and UAA. The chain is Peptide chain release factor 1 from Cronobacter sakazakii (strain ATCC BAA-894) (Enterobacter sakazakii).